The primary structure comprises 148 residues: Deoxyuridine 5'-triphosphate nucleotidohydrolase (148 aa).

Substrate contacts are provided by residues 67 to 69 (RSG), Asn-80, 84 to 86 (TID), and Lys-94.

Belongs to the dUTPase family. It depends on Mg(2+) as a cofactor.

It catalyses the reaction dUTP + H2O = dUMP + diphosphate + H(+). It participates in pyrimidine metabolism; dUMP biosynthesis; dUMP from dCTP (dUTP route): step 2/2. This enzyme is involved in nucleotide metabolism: it produces dUMP, the immediate precursor of thymidine nucleotides and it decreases the intracellular concentration of dUTP so that uracil cannot be incorporated into DNA. This chain is Deoxyuridine 5'-triphosphate nucleotidohydrolase, found in Orientia tsutsugamushi (strain Ikeda) (Rickettsia tsutsugamushi).